The sequence spans 263 residues: tRNA1(Val) (adenine(37)-N6)-methyltransferase (263 aa).

The protein belongs to the methyltransferase superfamily. tRNA (adenine-N(6)-)-methyltransferase family.

It is found in the cytoplasm. It carries out the reaction adenosine(37) in tRNA1(Val) + S-adenosyl-L-methionine = N(6)-methyladenosine(37) in tRNA1(Val) + S-adenosyl-L-homocysteine + H(+). Specifically methylates the adenine in position 37 of tRNA(1)(Val) (anticodon cmo5UAC). This is tRNA1(Val) (adenine(37)-N6)-methyltransferase from Salmonella choleraesuis (strain SC-B67).